A 390-amino-acid chain; its full sequence is MPKTAYVRTKPHLNIGTMGHVDHGKTTLTAAITKVLAERGSGTFVPFDRIDRAPEEAARGITINIAHVEYETDTRHYAHVDMPGHADYVKNMVTGAAQLDGAILVVSALDGIMPQTAEHVLLARQVGVDHIVVALNKADAGDEELTDLVELEVRELLTAHGYGGDSVPVVRVSGLKALEGDPRWTAAIDALLDAVDTYVPMPERYVDAPFLLPVENVLTITGRGTVVTGAVERGTIRVGDRVDVLGASVETVVTGLETFGKPMEEAQAGDNVALLLRGVPRDAVRRGHIVAAPGSVVPSRRFSARVYVLSTREGGRTTPVATGYRPQFYIRTADVVGDVDLGETAVARPGDTVTMTVSLGRDVPLEPGLGFAIREGGRTVGAGTVTTVED.

Residues 10-203 (KPHLNIGTMG…AVDTYVPMPE (194 aa)) form the tr-type G domain. A G1 region spans residues 19–26 (GHVDHGKT). GTP is bound at residue 19–26 (GHVDHGKT). Position 26 (Thr26) interacts with Mg(2+). The segment at 60–64 (GITIN) is G2. The tract at residues 81–84 (DMPG) is G3. GTP-binding positions include 81–85 (DMPGH) and 136–139 (NKAD). The interval 136-139 (NKAD) is G4. A G5 region spans residues 173-175 (SGL).

The protein belongs to the TRAFAC class translation factor GTPase superfamily. Classic translation factor GTPase family. EF-Tu/EF-1A subfamily. In terms of assembly, monomer.

Its subcellular location is the cytoplasm. It carries out the reaction GTP + H2O = GDP + phosphate + H(+). Functionally, GTP hydrolase that promotes the GTP-dependent binding of aminoacyl-tRNA to the A-site of ribosomes during protein biosynthesis. This Streptomyces avermitilis (strain ATCC 31267 / DSM 46492 / JCM 5070 / NBRC 14893 / NCIMB 12804 / NRRL 8165 / MA-4680) protein is Elongation factor Tu 2.